Reading from the N-terminus, the 862-residue chain is DNA mismatch repair protein MutS (862 aa).

Gly604–Ser611 lines the ATP pocket.

The protein belongs to the DNA mismatch repair MutS family.

Its function is as follows. This protein is involved in the repair of mismatches in DNA. It is possible that it carries out the mismatch recognition step. This protein has a weak ATPase activity. The chain is DNA mismatch repair protein MutS from Brevibacillus brevis (strain 47 / JCM 6285 / NBRC 100599).